Here is a 347-residue protein sequence, read N- to C-terminus: Fc receptor-like A (347 aa).

Positions 1–27 are cleaved as a signal peptide; sequence MKLSCMLIEWALYVCPAVLLATQMSLA. 2 Ig-like C2-type domains span residues 77–166 and 179–257; these read PFHL…ETAS and PVLK…RQIS. Disulfide bonds link Cys106–Cys150 and Cys199–Cys247. Positions 272–296 are disordered; sequence KPATPETPPPAKAPGPLPLLPTPSD. Over residues 276–292 the composition is skewed to pro residues; that stretch reads PETPPPAKAPGPLPLLP.

As to quaternary structure, monomer or homodimer; disulfide-linked.

The protein resides in the cytoplasm. Functionally, may be implicated in B-cell differentiation and lymphomagenesis. The protein is Fc receptor-like A (Fcrla) of Rattus norvegicus (Rat).